The following is an 84-amino-acid chain: Large ribosomal subunit protein bL27 (84 aa).

Belongs to the bacterial ribosomal protein bL27 family.

The sequence is that of Large ribosomal subunit protein bL27 from Salinispora tropica (strain ATCC BAA-916 / DSM 44818 / JCM 13857 / NBRC 105044 / CNB-440).